The primary structure comprises 1131 residues: Activity-dependent neuroprotector homeobox protein 2 (1131 aa).

The C2H2-type 1 zinc finger occupies 73–96 (YCCGLCKYSTKVLTSFKNHLHRYH). The C2H2-type 2; degenerate zinc-finger motif lies at 106-128 (IPCPNCVFASQPKVVGRHFRMFH). Residues Lys118 and Lys146 each participate in a glycyl lysine isopeptide (Lys-Gly) (interchain with G-Cter in SUMO2) cross-link. A C2H2-type 3; degenerate zinc finger spans residues 155–178 (FTCLKCNFSNTLYYSMKKHVLVAH). The segment at 215-240 (YYCKKCNANASSQDALMYHILTSDIH) adopts a C2H2-type 4 zinc-finger fold. Residues 274–285 (LAAPANGSAPSA) show a composition bias toward low complexity. Residues 274–329 (LAAPANGSAPSAPAQPPCFHLALPQNSPSPAAGQPVTVAQGAPGSLTHSPPAAGQS) form a disordered region. The C2H2-type 5; degenerate zinc finger occupies 694-716 (KTCPVCNELFPSNVYQVHMEVAH). The C2H2-type 6; degenerate zinc-finger motif lies at 747–768 (VRCLSCKCLVSEEELIHHLLMH). 2 C2H2-type zinc fingers span residues 770–793 (LGCL…RNRH) and 875–898 (STCP…KERH). The segment at 913–937 (FKCIHCCGVYTGNMTLAAIAVHLVR) adopts a C2H2-type 9; degenerate zinc-finger fold. Glycyl lysine isopeptide (Lys-Gly) (interchain with G-Cter in SUMO2) cross-links involve residues Lys979 and Lys1018. Ser1024 bears the Phosphoserine mark. Residue Lys1032 forms a Glycyl lysine isopeptide (Lys-Gly) (interchain with G-Cter in SUMO1); alternate linkage. Lys1032 is covalently cross-linked (Glycyl lysine isopeptide (Lys-Gly) (interchain with G-Cter in SUMO2); alternate). A DNA-binding region (homeobox) is located at residues 1043-1102 (PKKYEGRSYEEKKQFLKDYFHKKPYPSKKEIELLSSLFWVWKIDVASFFGKRRYICMKAI).

It belongs to the krueppel C2H2-type zinc-finger protein family. May interact with SMARCA4/BRG1.

It localises to the nucleus. In terms of biological role, may be involved in transcriptional regulation. May play a role in neuronal function; perhaps involved in protection of brain tissues from oxidative stress. May be involved in erythroid differentiation. This is Activity-dependent neuroprotector homeobox protein 2 (ADNP2) from Homo sapiens (Human).